A 1467-amino-acid chain; its full sequence is Neuropathy target esterase sws (1467 aa).

Over 1-34 (MDVLEMLRASASGSYNTIFSDAWCQYVSKQITAT) the chain is Lumenal. The chain crosses the membrane as a helical span at residues 35–55 (MYMYCAFGLMGVLFLAWFMYF). The Cytoplasmic portion of the chain corresponds to 56–1467 (KRLARLRLRD…RSSTYNETKN (1412 aa)). 174-301 (IFGHFEKPIF…IRVIQVIMIR (128 aa)) is a binding site for a nucleoside 3',5'-cyclic phosphate. Disordered regions lie at residues 332 to 353 (TMSGPINSQTSQSSRQATANGP) and 372 to 416 (MGMG…SVHG). Residues 339–350 (SQTSQSSRQATA) show a composition bias toward low complexity. A phosphoserine mark is found at Ser-450 and Ser-459. A nucleoside 3',5'-cyclic phosphate contacts are provided by residues 488 to 615 (ELGL…VVRR) and 604 to 731 (IVLD…LSHR). The PNPLA domain occupies 958-1124 (LVLGGGGARG…VNNLPGHLWR (167 aa)). The GXGXXG signature appears at 962–967 (GGGARG). A GXSXG motif is present at residues 989 to 993 (GVSIG). Catalysis depends on Ser-991, which acts as the Nucleophile. The active-site Proton acceptor is Asp-1111. The DGA/G motif lies at 1111–1113 (DGG). Ser-1205 carries the phosphoserine modification. The disordered stretch occupies residues 1377 to 1467 (RKMDKSTQST…RSSTYNETKN (91 aa)). Polar residues predominate over residues 1382 to 1393 (STQSTPPTSSRA). Basic and acidic residues-rich tracts occupy residues 1396–1406 (RGKEEARHMDN) and 1448–1458 (LADKDEDKENR).

This sequence belongs to the NTE family. In terms of assembly, interacts with Pka-C3; interaction inhibits the catalytic function of Pka-C3 and the esterase activity of sws.

It localises to the endoplasmic reticulum membrane. It catalyses the reaction a 1-acyl-sn-glycero-3-phosphocholine + H2O = sn-glycerol 3-phosphocholine + a fatty acid + H(+). Functionally, phospholipase B that deacylates intracellular phosphatidylcholine (PtdCho), generating glycerophosphocholine (GroPtdCho). This deacylation occurs at both sn-2 and sn-1 positions of PtdCho. Its specific chemical modification by certain organophosphorus (OP) compounds leads to distal axonopathy. Plays a role in the signaling mechanism between neurons and glia that regulates glia wrapping during development of the adult brain. Essential for membrane lipid homeostasis and cell survival in both neurons and glia of the adult brain. The sequence is that of Neuropathy target esterase sws from Drosophila yakuba (Fruit fly).